The sequence spans 155 residues: DNA gyrase inhibitor (155 aa).

Belongs to the DNA gyrase inhibitor family. As to quaternary structure, interacts with DNA gyrase.

The protein localises to the cytoplasm. Inhibits the supercoiling activity of DNA gyrase. Acts by inhibiting DNA gyrase at an early step, prior to (or at the step of) binding of DNA by the gyrase. It protects cells against toxins that target DNA gyrase, by inhibiting activity of these toxins and reducing the formation of lethal double-strand breaks in the cell. This Edwardsiella ictaluri (strain 93-146) protein is DNA gyrase inhibitor.